The chain runs to 453 residues: Tubulin delta chain (453 aa).

143-149 (AGGTGSG) lines the GTP pocket.

This sequence belongs to the tubulin family. In terms of assembly, found in a complex with TEDC1, TEDC2, TUBE1 and TUBD1.

The protein localises to the nucleus. Its subcellular location is the cytoplasm. The protein resides in the cytoskeleton. It is found in the microtubule organizing center. It localises to the centrosome. The protein localises to the centriole. Its subcellular location is the cell projection. The protein resides in the cilium. In terms of biological role, acts as a positive regulator of hedgehog signaling and regulates ciliary function. This is Tubulin delta chain (TUBD1) from Homo sapiens (Human).